We begin with the raw amino-acid sequence, 206 residues long: Large ribosomal subunit protein uL4 (206 aa).

The tract at residues 63–93 (MYKQKGTGRARHHSARAPQFRGGGKAHGPVV) is disordered. Positions 64–77 (YKQKGTGRARHHSA) are enriched in basic residues.

This sequence belongs to the universal ribosomal protein uL4 family. In terms of assembly, part of the 50S ribosomal subunit.

One of the primary rRNA binding proteins, this protein initially binds near the 5'-end of the 23S rRNA. It is important during the early stages of 50S assembly. It makes multiple contacts with different domains of the 23S rRNA in the assembled 50S subunit and ribosome. In terms of biological role, forms part of the polypeptide exit tunnel. In Rhizobium meliloti (strain 1021) (Ensifer meliloti), this protein is Large ribosomal subunit protein uL4.